The chain runs to 1458 residues: ATPase family AAA domain-containing protein 2B (1458 aa).

Positions 1–155 (MVNTRKSSLR…LRGEKKGDGD (155 aa)) are disordered. Ser-16 is subject to Phosphoserine. Residues 23–33 (PGAGAEPGATG) show a composition bias toward gly residues. Residues 34–58 (GSSHFISSRTRSSKTRAASCPAAKA) show a composition bias toward low complexity. Phosphoserine is present on residues Ser-79, Ser-81, and Ser-86. The span at 99–115 (VCKDKSKSRSTGQREEW) shows a compositional bias: basic and acidic residues. Polar residues predominate over residues 116-129 (NLSTGQARLTSQPG). Ser-140 is modified (phosphoserine). Thr-221 carries the post-translational modification Phosphothreonine. The disordered stretch occupies residues 244–286 (NSYGIQNHHEVSTEGEEEESQEEDGDIEVEEAEGEENDRPYNL). Over residues 256 to 279 (TEGEEEESQEEDGDIEVEEAEGEE) the composition is skewed to acidic residues. Ser-318 bears the Phosphoserine mark. A compositionally biased stretch (basic residues) spans 321 to 332 (RRSHIRRKKHAI). The interval 321–353 (RRSHIRRKKHAIHSSDTTSSDEERFERRKSKSM) is disordered. Residue 441-448 (GPPGTGKT) participates in ATP binding. A Phosphoserine modification is found at Ser-939. Positions 943 to 974 (QLSESEKSRMEDQEENTLRELRLFLRDVTKRL) form a coiled coil. The region spanning 951 to 1066 (RMEDQEENTL…DTAHAIIAAE (116 aa)) is the Bromo domain. Disordered stretches follow at residues 1189–1208 (DCHEENGEETGDLSMTNDES), 1217–1257 (QGQR…EQTS), and 1309–1330 (LLEDQSKEKPETSTENHGDDLE). The span at 1240-1252 (NESLLVNSSSSLN) shows a compositional bias: low complexity. Residues Ser-1338 and Ser-1347 each carry the phosphoserine modification.

This sequence belongs to the AAA ATPase family. Binds acetylated lysine residues in histone H1.4, H2A, H2B, H3 and H4 (in vitro).

It localises to the nucleus. This is ATPase family AAA domain-containing protein 2B (ATAD2B) from Homo sapiens (Human).